The chain runs to 243 residues: Ornithine decarboxylase antizyme 3 (243 aa).

Phosphoserine is present on residues Ser-6, Ser-9, and Ser-12.

This sequence belongs to the ODC antizyme family. As to quaternary structure, interacts with ODC1 and thereby sterically blocks ODC homodimerization. Interacts with AZIN2; this interaction disrupts the interaction between the antizyme and ODC1. Interacts with GGN. Isoform 2 interacts with PPP1R16A; Modulates PPP1CB activity. In terms of tissue distribution, testis-specific. Isoform 2 is expressed in outer dense fibers, fibrous sheath and the connecting piece of sperm.

The protein resides in the nucleus. It is found in the cytoplasm. It localises to the cell projection. The protein localises to the cilium. Its subcellular location is the flagellum. In terms of biological role, ornithine decarboxylase (ODC) antizyme protein that negatively regulates ODC activity and intracellular polyamine biosynthesis and uptake in response to increased intracellular polyamine levels. Binds to ODC monomers, inhibiting the assembly of the functional ODC homodimers. Does not target the ODC monomers for degradation, which allows a protein synthesis-independent restoration of ODC activity. Stabilizes AZIN2 by interfering with its ubiquitination. Involved in the translocation of AZNI2 from ER-Golgi intermediate compartment (ERGIC) to the cytosol. Probably plays a key role in spermatogenesis by regulating the intracellular concentration of polyamines in haploid germ cells. Does not possess antizyme activity. Modulates PPP1CB activity through its interaction with PPP1R16A. In Rattus norvegicus (Rat), this protein is Ornithine decarboxylase antizyme 3.